Reading from the N-terminus, the 199-residue chain is Holliday junction branch migration complex subunit RuvA (199 aa).

A domain I region spans residues 1-63; that stretch reads MYEYLTGLVT…EDNISLFGFT (63 aa). The segment at 64-142 is domain II; sequence DQNEKNLFMQ…NESSSSLFAT (79 aa). Residues 143-149 are flexible linker; sequence TQLTVDA. A domain III region spans residues 150 to 199; sequence TVNRELKDALEALAALGYKERDIKKVQKALMKEEQMATDEYLRQALRLLN.

Belongs to the RuvA family. Homotetramer. Forms an RuvA(8)-RuvB(12)-Holliday junction (HJ) complex. HJ DNA is sandwiched between 2 RuvA tetramers; dsDNA enters through RuvA and exits via RuvB. An RuvB hexamer assembles on each DNA strand where it exits the tetramer. Each RuvB hexamer is contacted by two RuvA subunits (via domain III) on 2 adjacent RuvB subunits; this complex drives branch migration. In the full resolvosome a probable DNA-RuvA(4)-RuvB(12)-RuvC(2) complex forms which resolves the HJ.

Its subcellular location is the cytoplasm. Its function is as follows. The RuvA-RuvB-RuvC complex processes Holliday junction (HJ) DNA during genetic recombination and DNA repair, while the RuvA-RuvB complex plays an important role in the rescue of blocked DNA replication forks via replication fork reversal (RFR). RuvA specifically binds to HJ cruciform DNA, conferring on it an open structure. The RuvB hexamer acts as an ATP-dependent pump, pulling dsDNA into and through the RuvAB complex. HJ branch migration allows RuvC to scan DNA until it finds its consensus sequence, where it cleaves and resolves the cruciform DNA. The polypeptide is Holliday junction branch migration complex subunit RuvA (Limosilactobacillus reuteri subsp. reuteri (strain JCM 1112) (Lactobacillus reuteri)).